The chain runs to 90 residues: U7-theraphotoxin-Hhn1a 1 (90 aa).

Residues 1 to 19 (MKTAIFTVVLALAVFAVLS) form the signal peptide. The propeptide occupies 20-50 (FGWEANEKALSEEFTELIHEKEAASETEARE). 3 cysteine pairs are disulfide-bonded: cysteine 51–cysteine 65, cysteine 58–cysteine 70, and cysteine 64–cysteine 81.

It belongs to the neurotoxin 10 (Hwtx-1) family. 13 (Hntx-13) subfamily. In terms of tissue distribution, expressed by the venom gland.

It is found in the secreted. In terms of biological role, ion channel inhibitor. This Cyriopagopus hainanus (Chinese bird spider) protein is U7-theraphotoxin-Hhn1a 1.